We begin with the raw amino-acid sequence, 381 residues long: Short-chain dehydrogenase anuD (381 aa).

NADP(+)-binding residues include Ile-84, Lys-109, Asp-133, Asn-158, Tyr-244, and Lys-248. The active-site Proton acceptor is Tyr-244. The active-site Proton donor is Tyr-244. The Lowers pKa of active site Tyr role is filled by Lys-248.

The protein belongs to the short-chain dehydrogenases/reductases (SDR) family.

Its function is as follows. Highly reducing polyketide synthase; part of the gene cluster that mediates the biosynthesis of annullatin D, an alkylated aromatic polyketide with a fused dihydrobenzofuran lactone ring system that exhibits potent agonistic activities toward the cannabinoid receptors. AnuD does not seem to play a role within the pathway. The annullatin backbone 2-hydroxymethyl-3-pentylphenol is assembled from one acetyl-CoA starter unit and 5 malonyl-CoA elongation units by cooperation of the highly reducing polyketide synthase anuA, the short-chain dehydrogenase anuB and the oxidoreductase anuC, before being hydroxylated at the C-5 alkyl chain by the cytochrome P450 monooxygenase anuE to form (8S)-annullatin E. The prenyltransferase anuH subsequently installs one isoprenyl group at the benzene ring to form (8S)-annullatin J. Enzymatic or nonenzymatic dihydro-benzofuran ring formation between the prenyl and the phenolic hydroxyl groups in (8S)-annullatin J results in two diastereomers (2S,9S)-annullatin H and compound 12. The intermediate (2S,9S)-annullatin H is then converted to (2S,9S)-annullatin D by the FAD-linked oxidoreductase anuG-catalyzed five-member lactone ring formation. The isomer 12 acts as a substrate for the short-chain dehydrogenase anuF and is oxidized to (2R)-annullatin F, which is subsequently acetylated by an acetyltransferase leading to (2R)-annullatin G formation. The remaining enzymes identified within the cluster, anuD, anuI and anuJ, seem not to be involved in annullatin biosynthesis. This is Short-chain dehydrogenase anuD from Penicillium roqueforti (strain FM164).